The chain runs to 212 residues: uncharacterized protein (212 aa).

A disordered region spans residues 97–151; that stretch reads SDASEAKNDDRRSDGRFALYSVSDTPETTTASRSADRSTNPKTAKHPKSAAKPTV. Residues 100-111 are compositionally biased toward basic and acidic residues; that stretch reads SEAKNDDRRSDG.

This is an uncharacterized protein from Mycobacterium tuberculosis (strain CDC 1551 / Oshkosh).